The primary structure comprises 146 residues: Hemoglobin subunit beta-2 (146 aa).

One can recognise a Globin domain in the interval 2–146; sequence HWTAEEKQLI…VAHALARRYH (145 aa). H63 and H92 together coordinate heme b.

The protein belongs to the globin family. As to quaternary structure, heterotetramer of two alpha chains and two beta chains. As to expression, red blood cells.

In terms of biological role, involved in oxygen transport from the lung to the various peripheral tissues. The chain is Hemoglobin subunit beta-2 from Iguana iguana (Common iguana).